Consider the following 466-residue polypeptide: 3-isopropylmalate dehydratase large subunit (466 aa).

3 residues coordinate [4Fe-4S] cluster: Cys347, Cys407, and Cys410.

The protein belongs to the aconitase/IPM isomerase family. LeuC type 1 subfamily. As to quaternary structure, heterodimer of LeuC and LeuD. It depends on [4Fe-4S] cluster as a cofactor.

It carries out the reaction (2R,3S)-3-isopropylmalate = (2S)-2-isopropylmalate. The protein operates within amino-acid biosynthesis; L-leucine biosynthesis; L-leucine from 3-methyl-2-oxobutanoate: step 2/4. In terms of biological role, catalyzes the isomerization between 2-isopropylmalate and 3-isopropylmalate, via the formation of 2-isopropylmaleate. This is 3-isopropylmalate dehydratase large subunit from Escherichia fergusonii (strain ATCC 35469 / DSM 13698 / CCUG 18766 / IAM 14443 / JCM 21226 / LMG 7866 / NBRC 102419 / NCTC 12128 / CDC 0568-73).